We begin with the raw amino-acid sequence, 359 residues long: 4'-phosphopantetheinyl transferase A (359 aa).

It belongs to the P-Pant transferase superfamily.

It catalyses the reaction apo-[ACP] + CoA = holo-[ACP] + adenosine 3',5'-bisphosphate + H(+). Its activity is regulated as follows. Activity is inhibited bythe antifunfal copmpounds PD 404,182, 6-nitroso-1,2-benzopyrone, and calmidazolium chloride with IC(50) values of 3.9 uM, 35.2 uM, and 19.2 uM, respectively. In terms of biological role, acyl-carrier-protein synthase that transfers the 4'-phosphopantetheine moiety from coenzyme A to a Ser of an acyl-carrier-protein. The 4'-phosphopantetheine (4'-PPT) portion of CoA provides the essential prosthetic group for a number of carrier proteins and multi-domain enzymes, priming them for the acceptance of acyl building blocks in fatty acid synthesis and many aspects of secondary metabolism mediated by polyketide synthases (PKSs) and non-ribosomal peptide synthetases (NRPSs). PptA is able to transfer the cofactor to a broad range of enzymes with acyl- or peptidyl-carrier protein domains and activates target enzymes involved in the synthesis of lysine, but also secondary metabolites including gliotoxin, fumigaclavine C, fumiquinazole A, fumiquinazoline C, pyripyroprene A, fumagillin, the siderophores triacetylfusarinine C (TAFC) and ferricrocin (FC), and dihydroxy naphthalene (DHN)-melanin. Plays an essential role in virulence. This chain is 4'-phosphopantetheinyl transferase A, found in Aspergillus fumigatus (strain ATCC MYA-4609 / CBS 101355 / FGSC A1100 / Af293) (Neosartorya fumigata).